A 213-amino-acid polypeptide reads, in one-letter code: Gas vesicle protein F (213 aa).

Belongs to the gas vesicle GvpF/GvpL family. In terms of assembly, binds GvpA.

It is found in the gas vesicle. A minor component of the gas vesicle, may be involved in preventing GvpA aggregation during gas vesicle nucleation. Gas vesicles are hollow, gas filled proteinaceous nanostructures found in some microorganisms. They allow positioning of halobacteria at the optimal depth for growth in the poorly aerated, shallow brine pools of their habitat. In terms of biological role, expression of a 9.5 kb mc-vac DNA fragment containing 2 divergently transcribed regions (gvpD-gvpE-gvpF-gvpG-gvpH-gvpI-gvpJ-gvpK-gvpL-gvpM and gvpA-gvpC-gvpN-gvpO) allows H.volcanii to produce gas vesicles. This Haloferax mediterranei (strain ATCC 33500 / DSM 1411 / JCM 8866 / NBRC 14739 / NCIMB 2177 / R-4) (Halobacterium mediterranei) protein is Gas vesicle protein F.